The chain runs to 412 residues: Proline-rich protein 30 (412 aa).

2 stretches are compositionally biased toward polar residues: residues 1–15 (MLPQNKDQVLPQTSV) and 23–39 (GFSQLVDSSPHNLQPLS). 3 disordered regions span residues 1-88 (MLPQ…HPYS), 123-174 (PLTP…SNRQ), and 317-412 (RPKE…KSSV). Composition is skewed to low complexity over residues 50 to 59 (PFSSTQSRRP), 126 to 142 (PSFSPSQPQNSSLPHSP), and 334 to 350 (QLPASQPPAAQARADPV). The segment covering 353-372 (TPSQTRSFRSAGLQSPNSPR) has biased composition (polar residues).

The chain is Proline-rich protein 30 (PRR30) from Homo sapiens (Human).